The sequence spans 441 residues: Phosphoglucosamine mutase (441 aa).

Catalysis depends on Ser-100, which acts as the Phosphoserine intermediate. Residues Ser-100, Asp-239, Asp-241, and Asp-243 each coordinate Mg(2+). At Ser-100 the chain carries Phosphoserine.

It belongs to the phosphohexose mutase family. Mg(2+) serves as cofactor. In terms of processing, activated by phosphorylation.

The enzyme catalyses alpha-D-glucosamine 1-phosphate = D-glucosamine 6-phosphate. Its function is as follows. Catalyzes the conversion of glucosamine-6-phosphate to glucosamine-1-phosphate. In Ruthia magnifica subsp. Calyptogena magnifica, this protein is Phosphoglucosamine mutase.